Reading from the N-terminus, the 353-residue chain is Probable tRNA pseudouridine synthase B (353 aa).

Aspartate 45 acts as the Nucleophile in catalysis. One can recognise a PUA domain in the interval 211-287 (YPKIVAKKSA…DHIFVEAKHG (77 aa)). Residues 292–353 (VRDREKDVQR…TGVHRRPGSH (62 aa)) are disordered. Residues 309-328 (NIRDAAHGPDSRTGRGRKET) are compositionally biased toward basic and acidic residues. Residues 336 to 353 (RVRKLQNKTGVHRRPGSH) are compositionally biased toward basic residues.

The protein belongs to the pseudouridine synthase TruB family. Type 2 subfamily.

It catalyses the reaction uridine(55) in tRNA = pseudouridine(55) in tRNA. Functionally, could be responsible for synthesis of pseudouridine from uracil-55 in the psi GC loop of transfer RNAs. This Thermoplasma volcanium (strain ATCC 51530 / DSM 4299 / JCM 9571 / NBRC 15438 / GSS1) protein is Probable tRNA pseudouridine synthase B.